The following is a 293-amino-acid chain: MARPPRQHPGVWASLLLLLLTGPAACAASPADDGAGPGGRGPRGRARGDTGADEAVPRHDSSYGTFAGEFYDLRYLSEEGYPFPTAPPVDPFAKIKVDDCGKTKGCFRYGKPGCNAETCDYFLSYRMIGADVEFELSADTDGWVAVGFSSDKKMGGDDVMACVHDDNGRVRIQHFYNVGQWAKEIQRNPARDEEGVFENNRVTCRFKRPVNVPRDETIVDLHLSWYYLFAWGPAIQGSITRHDIDSPPASERVVSIYKYEDIFMPSAAYQTFSSPFCLLLIVALTFYLLMGTP.

The N-terminal stretch at 1–28 (MARPPRQHPGVWASLLLLLLTGPAACAA) is a signal peptide. The tract at residues 29–61 (SPADDGAGPGGRGPRGRARGDTGADEAVPRHDS) is disordered. The segment covering 46–61 (ARGDTGADEAVPRHDS) has biased composition (basic and acidic residues). The DOMON domain maps to 119-234 (CDYFLSYRMI…WYYLFAWGPA (116 aa)). Residues 271–291 (TFSSPFCLLLIVALTFYLLMG) traverse the membrane as a helical segment.

Component of the outer core of AMPAR complex. AMPAR complex consists of an inner core made of 4 pore-forming GluA/GRIA proteins (GRIA1, GRIA2, GRIA3 and GRIA4) and 4 major auxiliary subunits arranged in a twofold symmetry. One of the two pairs of distinct binding sites is occupied either by CNIH2, CNIH3 or CACNG2, CACNG3. The other harbors CACNG2, CACNG3, CACNG4, CACNG8 or GSG1L. This inner core of AMPAR complex is complemented by outer core constituents binding directly to the GluA/GRIA proteins at sites distinct from the interaction sites of the inner core constituents. Outer core constituents include at least PRRT1, PRRT2, CKAMP44/SHISA9, FRRS1L and NRN1. The proteins of the inner and outer core serve as a platform for other, more peripherally associated AMPAR constituents. Alone or in combination, these auxiliary subunits control the gating and pharmacology of the AMPAR complex and profoundly impact their biogenesis and protein processing. In terms of tissue distribution, expressed in adult and fetal brain. Very weak expression in medulla, spinal cord and in adult ovary.

It is found in the cell membrane. It localises to the synapse. In terms of biological role, important modulator of glutamate signaling pathway. This Homo sapiens (Human) protein is DOMON domain-containing protein FRRS1L (FRRS1L).